The chain runs to 766 residues: Protein translocase subunit SecA 2 (766 aa).

ATP-binding positions include Gln84, 102-106 (GEGKT), and Asp490.

Belongs to the SecA family. Monomer and homodimer. Part of the essential Sec protein translocation apparatus which comprises SecA, SecYEG and auxiliary proteins SecDF. Other proteins may also be involved.

It is found in the cell membrane. It localises to the cytoplasm. The enzyme catalyses ATP + H2O + cellular proteinSide 1 = ADP + phosphate + cellular proteinSide 2.. In terms of biological role, part of the Sec protein translocase complex. Interacts with the SecYEG preprotein conducting channel. Has a central role in coupling the hydrolysis of ATP to the transfer of proteins into and across the cell membrane, serving as an ATP-driven molecular motor driving the stepwise translocation of polypeptide chains across the membrane. This chain is Protein translocase subunit SecA 2, found in Thermobifida fusca (strain YX).